The following is a 485-amino-acid chain: Glutamyl-tRNA(Gln) amidotransferase subunit A (485 aa).

Catalysis depends on charge relay system residues K76 and S151. The active-site Acyl-ester intermediate is the S175.

Belongs to the amidase family. GatA subfamily. Heterotrimer of A, B and C subunits.

It carries out the reaction L-glutamyl-tRNA(Gln) + L-glutamine + ATP + H2O = L-glutaminyl-tRNA(Gln) + L-glutamate + ADP + phosphate + H(+). Allows the formation of correctly charged Gln-tRNA(Gln) through the transamidation of misacylated Glu-tRNA(Gln) in organisms which lack glutaminyl-tRNA synthetase. The reaction takes place in the presence of glutamine and ATP through an activated gamma-phospho-Glu-tRNA(Gln). The sequence is that of Glutamyl-tRNA(Gln) amidotransferase subunit A from Methylococcus capsulatus (strain ATCC 33009 / NCIMB 11132 / Bath).